The following is a 314-amino-acid chain: Aspartate carbamoyltransferase catalytic subunit (314 aa).

Carbamoyl phosphate is bound by residues Arg-58 and Thr-59. Lys-86 serves as a coordination point for L-aspartate. 3 residues coordinate carbamoyl phosphate: Arg-108, His-136, and Gln-139. Positions 169 and 223 each coordinate L-aspartate. Carbamoyl phosphate is bound by residues Gly-264 and Pro-265.

It belongs to the aspartate/ornithine carbamoyltransferase superfamily. ATCase family. Heterododecamer (2C3:3R2) of six catalytic PyrB chains organized as two trimers (C3), and six regulatory PyrI chains organized as three dimers (R2).

It catalyses the reaction carbamoyl phosphate + L-aspartate = N-carbamoyl-L-aspartate + phosphate + H(+). The protein operates within pyrimidine metabolism; UMP biosynthesis via de novo pathway; (S)-dihydroorotate from bicarbonate: step 2/3. In terms of biological role, catalyzes the condensation of carbamoyl phosphate and aspartate to form carbamoyl aspartate and inorganic phosphate, the committed step in the de novo pyrimidine nucleotide biosynthesis pathway. The sequence is that of Aspartate carbamoyltransferase catalytic subunit from Opitutus terrae (strain DSM 11246 / JCM 15787 / PB90-1).